The following is an 850-amino-acid chain: Trimethylguanosine synthase (850 aa).

Positions 54 to 85 (NNAGDRVTEEEEDDHSSGTTESHSADEGDLDP) are disordered. Position 61 is a phosphothreonine (Thr-61). Ser-92 and Ser-152 each carry phosphoserine. Disordered stretches follow at residues 278-311 (DQNA…DNDH), 327-454 (EVEQ…GGIP), and 523-566 (ISQE…PENC). A compositionally biased stretch (basic and acidic residues) spans 363–374 (TPKESDISENRS). The segment covering 375–390 (SDQPAQELQESSGTNT) has biased composition (polar residues). Phosphoserine occurs at positions 405 and 431. Residues 424 to 435 (DIDENPDSEVDD) are compositionally biased toward acidic residues. Residues 548 to 562 (SMEKTDGLMETRDPE) are compositionally biased toward basic and acidic residues. Ser-571 is subject to Phosphoserine. A disordered region spans residues 595–628 (TEGVANSPRAEAEVEIKKKKKKKKKNKNKKINGL). Positions 611–624 (KKKKKKKKKNKNKK) are enriched in basic residues. Position 713 (Asp-713) interacts with S-adenosyl-L-methionine.

Belongs to the methyltransferase superfamily. Trimethylguanosine synthase family. In terms of assembly, may form homooligomers. Interacts with CREBBP/CBP, EED/WAIT1, EP300/P300, NCOA6/PRIP, PPARBP/PBP and SMN. A 55 kDa isoform is widely expressed while a 90 kDa isoform is detected exclusively in brain and testis (at protein level).

It localises to the cytoplasm. The protein resides in the nucleus. Its subcellular location is the cajal body. The protein localises to the nucleolus. It catalyses the reaction a 5'-end (N(7)-methyl 5'-triphosphoguanosine)-ribonucleoside in snRNA + S-adenosyl-L-methionine = a 5'-end (N(2),N(7)-dimethyl 5'-triphosphoguanosine)-ribonucleoside in snRNA + S-adenosyl-L-homocysteine + H(+). The catalysed reaction is a 5'-end (N(7)-methyl 5'-triphosphoguanosine)-ribonucleoside in snoRNA + S-adenosyl-L-methionine = a 5'-end (N(2),N(7)-dimethyl 5'-triphosphoguanosine)-ribonucleoside in snoRNA + S-adenosyl-L-homocysteine + H(+). The enzyme catalyses a 5'-end (N(2),N(7)-dimethyl 5'-triphosphoguanosine)-ribonucleoside in snRNA + S-adenosyl-L-methionine = a 5'-end (N(2),N(2),N(7)-trimethyl 5'-triphosphoguanosine)-ribonucleoside in snRNA + S-adenosyl-L-homocysteine + H(+). It carries out the reaction a 5'-end (N(2),N(7)-dimethyl 5'-triphosphoguanosine)-ribonucleoside in snoRNA + S-adenosyl-L-methionine = a 5'-end (N(2),N(2),N(7)-trimethyl 5'-triphosphoguanosine)-ribonucleoside in snoRNA + S-adenosyl-L-homocysteine + H(+). In terms of biological role, catalyzes the 2 serial methylation steps for the conversion of the 7-monomethylguanosine (m(7)G) caps of snRNAs and snoRNAs to a 2,2,7-trimethylguanosine (m(2,2,7)G) cap structure. The enzyme is specific for guanine, and N7 methylation must precede N2 methylation. Hypermethylation of the m7G cap of U snRNAs leads to their concentration in nuclear foci, their colocalization with coilin and the formation of canonical Cajal bodies (CBs). Plays a role in transcriptional regulation. This is Trimethylguanosine synthase from Rattus norvegicus (Rat).